Consider the following 223-residue polypeptide: 2-C-methyl-D-erythritol 4-phosphate cytidylyltransferase (223 aa).

The protein belongs to the IspD/TarI cytidylyltransferase family. IspD subfamily.

It carries out the reaction 2-C-methyl-D-erythritol 4-phosphate + CTP + H(+) = 4-CDP-2-C-methyl-D-erythritol + diphosphate. The protein operates within isoprenoid biosynthesis; isopentenyl diphosphate biosynthesis via DXP pathway; isopentenyl diphosphate from 1-deoxy-D-xylulose 5-phosphate: step 2/6. In terms of biological role, catalyzes the formation of 4-diphosphocytidyl-2-C-methyl-D-erythritol from CTP and 2-C-methyl-D-erythritol 4-phosphate (MEP). This chain is 2-C-methyl-D-erythritol 4-phosphate cytidylyltransferase, found in Synechococcus sp. (strain WH7803).